The following is a 99-amino-acid chain: Plastocyanin (99 aa).

The 99-residue stretch at 1–99 (LDVLLGGDDG…AGMVGKVTVN (99 aa)) folds into the Plastocyanin-like domain. Cu cation is bound by residues H37, C84, H87, and M92.

It belongs to the plastocyanin family. It depends on Cu(2+) as a cofactor.

Its subcellular location is the plastid. It localises to the chloroplast thylakoid membrane. Functionally, participates in electron transfer between P700 and the cytochrome b6-f complex in photosystem I. This Solanum tuberosum (Potato) protein is Plastocyanin (PETE).